A 153-amino-acid chain; its full sequence is Ribosome maturation factor RimP (153 aa).

The protein belongs to the RimP family.

It is found in the cytoplasm. Required for maturation of 30S ribosomal subunits. This Pelotomaculum thermopropionicum (strain DSM 13744 / JCM 10971 / SI) protein is Ribosome maturation factor RimP.